A 389-amino-acid polypeptide reads, in one-letter code: Transmembrane protease serine 11A (389 aa).

The Cytoplasmic segment spans residues 1-23 (MEVAGYGTHNRDLKQWMVTLLSA). The chain crosses the membrane as a helical; Signal-anchor for type II membrane protein span at residues 24–44 (LSLMMVVVTIGLLALFLVFDI). Positions 31-148 (VTIGLLALFL…SLVQVKDCGK (118 aa)) constitute an SEA domain. Topologically, residues 45–389 (QVNSNSGQKS…RHWIASKTGL (345 aa)) are extracellular. Positions 158–388 (IVSGNPAAKG…YRHWIASKTG (231 aa)) constitute a Peptidase S1 domain. A disulfide bond links Cys-183 and Cys-199. Catalysis depends on charge relay system residues His-198 and Asp-243. N-linked (GlcNAc...) asparagine glycosylation occurs at Asn-274. 2 disulfide bridges follow: Cys-308-Cys-324 and Cys-335-Cys-364. Catalysis depends on Ser-339, which acts as the Charge relay system.

Belongs to the peptidase S1 family.

The protein localises to the membrane. Probable serine protease which may play a role in cellular senescence. Overexpression inhibits cell growth and induce G1 cell cycle arrest. The chain is Transmembrane protease serine 11A (Tmprss11a) from Mus musculus (Mouse).